We begin with the raw amino-acid sequence, 82 residues long: DNA-directed RNA polymerase subunit Rpo5 (82 aa).

This sequence belongs to the archaeal Rpo5/eukaryotic RPB5 RNA polymerase subunit family. In terms of assembly, part of the RNA polymerase complex.

The protein resides in the cytoplasm. It carries out the reaction RNA(n) + a ribonucleoside 5'-triphosphate = RNA(n+1) + diphosphate. Its function is as follows. DNA-dependent RNA polymerase (RNAP) catalyzes the transcription of DNA into RNA using the four ribonucleoside triphosphates as substrates. The polypeptide is DNA-directed RNA polymerase subunit Rpo5 (Thermococcus celer).